The following is a 144-amino-acid chain: MIALIQRVSEAAVRVDGEVVGAIDKGLLVLLGVEREDDEAKAKRLVERVTSYRVFEDSEGKMNLSVKDVGGSVLVVSQFTLPADTKKGTRAGFSRGAAPQEAERLYDYFSDLCAQILPTERGRFAADMKVSLINDGPVTFWLQA.

Residues 136–137 (GP) carry the Gly-cisPro motif, important for rejection of L-amino acids motif.

This sequence belongs to the DTD family. Homodimer.

It localises to the cytoplasm. It carries out the reaction glycyl-tRNA(Ala) + H2O = tRNA(Ala) + glycine + H(+). It catalyses the reaction a D-aminoacyl-tRNA + H2O = a tRNA + a D-alpha-amino acid + H(+). Its function is as follows. An aminoacyl-tRNA editing enzyme that deacylates mischarged D-aminoacyl-tRNAs. Also deacylates mischarged glycyl-tRNA(Ala), protecting cells against glycine mischarging by AlaRS. Acts via tRNA-based rather than protein-based catalysis; rejects L-amino acids rather than detecting D-amino acids in the active site. By recycling D-aminoacyl-tRNA to D-amino acids and free tRNA molecules, this enzyme counteracts the toxicity associated with the formation of D-aminoacyl-tRNA entities in vivo and helps enforce protein L-homochirality. The chain is D-aminoacyl-tRNA deacylase from Vibrio cholerae serotype O1 (strain ATCC 39541 / Classical Ogawa 395 / O395).